The primary structure comprises 153 residues: MDHNQYLLTMFFADDDSFFKYLASQDDESSLSDILQITQYLDFLLLLLIQSKNKLEAVGHCYESLSEEYRQLTKFTDSQDFKKLFNKVPIVTDGRVKLNKGYLFDFVISLMRFKKESSLATTAIDPIRYIDPRRDIAFSNVMDILKSNKVNNN.

Belongs to the orthopoxvirus OPG100 family. As to quaternary structure, homodimer. Part of a complex composed of the kinase OPG054, OPG092, OPG114, OPG115, OPG142 and OPG157. Interacts with OPG175.

It is found in the virion. It localises to the host cytoplasm. Functionally, late protein which is a part of a large complex required for early virion morphogenesis. This complex participates in the formation of virosomes and the incorporation of virosomal contents into nascent immature virions. Plays a role in DNA packaging during immature virions (IV) formation. In Vaccinia virus (strain Copenhagen) (VACV), this protein is Virion assembly protein OPG100 (OPG100).